The primary structure comprises 160 residues: Cytochrome c-type biogenesis protein CcmE (160 aa).

The Cytoplasmic portion of the chain corresponds to 1 to 8; the sequence is MSAPRKTR. The chain crosses the membrane as a helical; Signal-anchor for type II membrane protein span at residues 9-29; sequence LYAILAVICGAVLTVALTLYA. The Periplasmic portion of the chain corresponds to 30-160; that stretch reads LSSNIDLFYT…PAAVTEGKRL (131 aa). 2 residues coordinate heme: His130 and Tyr134.

It belongs to the CcmE/CycJ family.

The protein resides in the cell inner membrane. In terms of biological role, heme chaperone required for the biogenesis of c-type cytochromes. Transiently binds heme delivered by CcmC and transfers the heme to apo-cytochromes in a process facilitated by CcmF and CcmH. The protein is Cytochrome c-type biogenesis protein CcmE of Pectobacterium carotovorum subsp. carotovorum (strain PC1).